Reading from the N-terminus, the 277-residue chain is Myelin proteolipid protein (277 aa).

Over 1–10 (MGLLECCARC) the chain is Cytoplasmic. 3 S-palmitoyl cysteine lipidation sites follow: Cys6, Cys7, and Cys10. The helical transmembrane segment at 11–36 (LVGAPFASLVATGLCFFGVALFCGCG) threads the bilayer. The Extracellular portion of the chain corresponds to 37 to 59 (HEALTGTEKLIETYFSKNYQDYE). The helical transmembrane segment at 60-88 (YLINVIHAFQYVIYGTASFFFLYGALLLA) threads the bilayer. At 89–151 (EGFYTTGAVR…LGKWLGHPDK (63 aa)) the chain is on the cytoplasmic side. Residue Cys109 is the site of S-palmitoyl cysteine attachment. Residue Ser114 is modified to Phosphoserine. Thr116 and Thr118 each carry phosphothreonine. S-palmitoyl cysteine attachment occurs at residues Cys139 and Cys141. A helical transmembrane segment spans residues 152 to 178 (FVGITYALTVVWLLVFACSAVPVYIYF). Residues 179 to 238 (NTWTTCQSIAFPSKTSASIGTLCADARMYGVLPWNAFPGKVCGSNLLSICKTAEFQMTFH) lie on the Extracellular side of the membrane. Cystine bridges form between Cys184/Cys228 and Cys201/Cys220. Thr199 carries the O-palmitoyl threonine lipid modification. Residues 239–268 (LFIAAFVGAAATLVSLLTFMIAATYNFAVL) traverse the membrane as a helical segment. Over 269–277 (KLMGRGTKF) the chain is Cytoplasmic.

The protein belongs to the myelin proteolipid protein family. In terms of assembly, interacts with MAL.

The protein resides in the cell membrane. It is found in the myelin membrane. This is the major myelin protein from the central nervous system. It plays an important role in the formation or maintenance of the multilamellar structure of myelin. This is Myelin proteolipid protein (PLP1) from Oryctolagus cuniculus (Rabbit).